A 984-amino-acid chain; its full sequence is MALDCLLLFLLASAVAAMEETLMDTRTATAELGWTANPASGWEEVSGYDENLNTIRTYQVCNVFEPNQNNWLLTTFINRRGAHRIYTEMRFTVRDCSSLPNVPGSCKETFNLYYYETDSVIATKKSAFWSEAPYLKVDTIAADESFSQVDFGGRLMKVNTEVRSFGPLTRNGFYLAFQDYGACMSLLSVRVFFKKCPSIVQNFAVFPETMTGAESTSLVIARGTCIPNAEEVDVPIKLYCNGDGEWMVPIGRCTCKAGYEPENSVACKACPAGTFKASQEAEGCSHCPSNSRSPSEASPICTCRTGYYRADFDPPEVACTSVPSGPRNVISIVNETSIILEWHPPRETGGRDDVTYNIICKKCRADRRSCSRCDDNVEFVPRQLGLTECRVSISSLWAHTPYTFDIQAINGVSSKSPFPPQHVSVNITTNQAAPSTVPIMHQVSATMRSITLSWPQPEQPNGIILDYEIRYYEKEHNEFNSSMARSQTNTARIDGLRPGMVYVVQVRARTVAGYGKFSGKMCFQTLTDDDYKSELREQLPLIAGSAAAGVVFVVSLVAISIVCSRKRAYSKEAVYSDKLQHYSTGRGSPGMKIYIDPFTYEDPNEAVREFAKEIDVSFVKIEEVIGAGEFGEVYKGRLKLPGKREIYVAIKTLKAGYSEKQRRDFLSEASIMGQFDHPNIIRLEGVVTKSRPVMIITEFMENGALDSFLRQNDGQFTVIQLVGMLRGIAAGMKYLSEMNYVHRDLAARNILVNSNLVCKVSDFGLSRYLQDDTSDPTYTSSLGGKIPVRWTAPEAIAYRKFTSASDVWSYGIVMWEVMSFGERPYWDMSNQDVINAIEQDYRLPPPMDCPAALHQLMLDCWQKDRNSRPRFAEIVNTLDKMIRNPASLKTVATITAVPSQPLLDRSIPDFTAFTTVDDWLSAIKMVQYRDSFLTAGFTSLQLVTQMTSEDLLRIGVTLAGHQKKILSSIHSMRVQMNQSPSVMA.

The signal sequence occupies residues 1 to 17 (MALDCLLLFLLASAVAA). Residues 18–540 (MEETLMDTRT…YKSELREQLP (523 aa)) lie on the Extracellular side of the membrane. Residues 19 to 201 (EETLMDTRTA…FFKKCPSIVQ (183 aa)) enclose the Eph LBD domain. Fibronectin type-III domains follow at residues 322-432 (VPSG…TNQA) and 433-528 (APST…TLTD). Residues Asn-334, Asn-426, and Asn-480 are each glycosylated (N-linked (GlcNAc...) asparagine). The helical transmembrane segment at 541–563 (LIAGSAAAGVVFVVSLVAISIVC) threads the bilayer. Residues 564–984 (SRKRAYSKEA…QMNQSPSVMA (421 aa)) lie on the Cytoplasmic side of the membrane. Tyr-600 carries the phosphotyrosine modification. Positions 619 to 882 (VKIEEVIGAG…EIVNTLDKMI (264 aa)) constitute a Protein kinase domain. Residues 625–633 (IGAGEFGEV) and Lys-651 contribute to the ATP site. Asp-744 acts as the Proton acceptor in catalysis. Residues 911 to 975 (TAFTTVDDWL…LSSIHSMRVQ (65 aa)) enclose the SAM domain. The residue at position 928 (Tyr-928) is a Phosphotyrosine; by autocatalysis. Residues 982 to 984 (VMA) carry the PDZ-binding motif.

Belongs to the protein kinase superfamily. Tyr protein kinase family. Ephrin receptor subfamily. As to quaternary structure, heterotetramer upon binding of the ligand. The heterotetramer is composed of an ephrin dimer and a receptor dimer. Oligomerization is probably required to induce biological responses. Interacts with EPHB6; transphosphorylates EPHB6 to form an active signaling complex. Interacts with PICK1. Interacts (through Tyr-594) with NCK1 (via SH2 domain); activates the JUN cascade to regulate cell adhesion. The ligand-activated form interacts (through Tyr-928) with GRB7 and GRB10 (via SH2 domains). The ligand-activated form interacts (residues within the catalytic domain) with GRB2 (via SH2 domain). Interacts with GRB2, SHC1 and SRC; activates the MAPK/ERK cascade to regulate cell migration. Interacts with CBL; regulates receptor degradation through ubiquitination. Interacts with ACP1. Phosphorylated. Autophosphorylation is stimulated by the ligand EFNB1. Required for interaction with SH2 domain-containing interactors, for activation of the MAPK/ERK and JUN signaling cascades and for ubiquitination by CBL. In terms of processing, ubiquitinated; (EFNB1)ligand-induced poly- and/or multi-ubiquitination by CBL is regulated by SRC and leads to lysosomal degradation. Restricted to brain and testes.

It localises to the cell membrane. The protein resides in the early endosome membrane. It is found in the cell projection. Its subcellular location is the dendrite. It carries out the reaction L-tyrosyl-[protein] + ATP = O-phospho-L-tyrosyl-[protein] + ADP + H(+). Receptor tyrosine kinase which binds promiscuously transmembrane ephrin-B family ligands residing on adjacent cells, leading to contact-dependent bidirectional signaling into neighboring cells. The signaling pathway downstream of the receptor is referred to as forward signaling while the signaling pathway downstream of the ephrin ligand is referred to as reverse signaling. Cognate/functional ephrin ligands for this receptor include EFNB1, EFNB2 and EFNB3. During nervous system development, regulates retinal axon guidance redirecting ipsilaterally ventrotemporal retinal ganglion cells axons at the optic chiasm midline. This probably requires repulsive interaction with EFNB2. In the adult nervous system together with EFNB3, regulates chemotaxis, proliferation and polarity of the hippocampus neural progenitors. In addition to its role in axon guidance also plays an important redundant role with other ephrin-B receptors in development and maturation of dendritic spines and synapse formation. May also regulate angiogenesis. More generally, may play a role in targeted cell migration and adhesion. Upon activation by EFNB1 and probably other ephrin-B ligands activates the MAPK/ERK and the JNK signaling cascades to regulate cell migration and adhesion respectively. Involved in the maintenance of the pool of satellite cells (muscle stem cells) by promoting their self-renewal and reducing their activation and differentiation. The sequence is that of Ephrin type-B receptor 1 (Ephb1) from Rattus norvegicus (Rat).